Here is a 59-residue protein sequence, read N- to C-terminus: Large ribosomal subunit protein uL30 (59 aa).

This sequence belongs to the universal ribosomal protein uL30 family. As to quaternary structure, part of the 50S ribosomal subunit.

The polypeptide is Large ribosomal subunit protein uL30 (Pectobacterium atrosepticum (strain SCRI 1043 / ATCC BAA-672) (Erwinia carotovora subsp. atroseptica)).